A 232-amino-acid polypeptide reads, in one-letter code: Platelet-activating factor acetylhydrolase IB subunit alpha1 (232 aa).

The disordered stretch occupies residues 1-20; it reads MSGEGENPASKPTPVQDVQG. Ser2 is modified (N-acetylserine). Ser2 carries the post-translational modification Phosphoserine. Active-site residues include Ser48, Asp193, and His196.

The protein belongs to the 'GDSL' lipolytic enzyme family. Platelet-activating factor acetylhydrolase IB beta/gamma subunits subfamily. In terms of assembly, forms a catalytic dimer which is either homodimer (alpha1/alpha1 homodimer) or heterodimer with PAFAH1B2 (alpha1/alpha2 heterodimer). Component of the cytosolic (PAF-AH (I)) heterotetrameric enzyme, which is composed of PAFAH1B1 (beta), PAFAH1B2 (alpha2) and PAFAH1B3 (alpha1) subunits. The catalytic activity of the enzyme resides in the alpha1 (PAFAH1B3) and alpha2 (PAFAH1B2) subunits, whereas the beta subunit (PAFAH1B1) has regulatory activity. Trimer formation is not essential for the catalytic activity. Interacts with VLDLR; this interaction may modulate the Reelin pathway. As to expression, expressed in brain, spleen, lung, liver, kidney and testis. Not expressed in heart and skeletal muscle. Expressed in fetal brain as heterodimer. Not expressed in adult tissues. Expressed exclusively in granule cells.

It localises to the cytoplasm. It carries out the reaction a 1-O-alkyl-2-acetyl-sn-glycero-3-phosphocholine + H2O = a 1-O-alkyl-sn-glycero-3-phosphocholine + acetate + H(+). The enzyme catalyses 1-O-hexadecyl-2-acetyl-sn-glycero-3-phosphocholine + H2O = 1-O-hexadecyl-sn-glycero-3-phosphocholine + acetate + H(+). The catalysed reaction is 1-O-hexadecyl-2-acetyl-sn-glycero-3-phosphate + H2O = 1-O-hexadecyl-sn-glycero-3-phosphate + acetate + H(+). Beta subunit (PAFAH1B1) inhibits the acetylhydrolase activity of the alpha1/alpha1 catalytic homodimer. Its function is as follows. Alpha1 catalytic subunit of the cytosolic type I platelet-activating factor (PAF) acetylhydrolase (PAF-AH (I)) heterotetrameric enzyme that catalyzes the hydrolyze of the acetyl group at the sn-2 position of PAF and its analogs and modulates the action of PAF. The activity and substrate specificity of PAF-AH (I) are affected by its subunit composition. Both alpha1/alpha1 homodimer (PAFAH1B3/PAFAH1B3 homodimer) and alpha1/alpha2 heterodimer(PAFAH1B3/PAFAH1B2 heterodimer) hydrolyze 1-O-alkyl-2-acetyl-sn-glycero-3-phosphoric acid (AAGPA) more efficiently than PAF, but they have little hydrolytic activity towards 1-O-alkyl-2-acetyl-sn-glycero-3-phosphorylethanolamine (AAGPE). Plays an important role during the development of brain. The polypeptide is Platelet-activating factor acetylhydrolase IB subunit alpha1 (Rattus norvegicus (Rat)).